Consider the following 545-residue polypeptide: Hsk1-interacting molecule 1 (545 aa).

The segment at 492 to 541 (VDAKPGYCENCREKFDNFESHIRSSRHRRFAENNDNFKDLDELFALVQRP) adopts a DBF4-type zinc-finger fold. Cys-499, Cys-502, His-512, and His-518 together coordinate Zn(2+).

In terms of assembly, associates with hsk1. Interacts with mcm10. In terms of processing, hyperphosphorylated at the G1/S and S-phases of the cell cycle.

Its subcellular location is the nucleus. In terms of biological role, activates hsk1 kinase and is essential for G1/S transition. Has a role in S-phase checkpoint control induced by replication fork blocks after nucleotide deprivation and DNA damage. The polypeptide is Hsk1-interacting molecule 1 (him1) (Schizosaccharomyces pombe (strain 972 / ATCC 24843) (Fission yeast)).